We begin with the raw amino-acid sequence, 304 residues long: Uricase (304 aa).

Alanine 2 carries the N-acetylalanine modification. 2 positions are modified to N6-acetyllysine; alternate: lysine 10 and lysine 23. An N6-succinyllysine; alternate mark is found at lysine 10 and lysine 23. The active-site Charge relay system is lysine 23. Lysine 27 and lysine 36 each carry N6-acetyllysine. Residues serine 39 and serine 63 each carry the phosphoserine modification. Threonine 68 acts as the Charge relay system in catalysis. Urate-binding residues include threonine 68 and aspartate 69. An N6-acetyllysine mark is found at lysine 118, lysine 122, and lysine 164. Phenylalanine 170 lines the urate pocket. 2 positions are modified to N6-acetyllysine: lysine 175 and lysine 185. Arginine 187 is a binding site for urate. N6-acetyllysine; alternate is present on residues lysine 221 and lysine 228. N6-succinyllysine; alternate is present on residues lysine 221 and lysine 228. Serine 232 is subject to Phosphoserine. Residues valine 235, glutamine 236, and asparagine 262 each coordinate urate. Histidine 264 serves as the catalytic Charge relay system. Lysine 278 carries the N6-acetyllysine modification. Tyrosine 289 is subject to Phosphotyrosine. The Microbody targeting signal motif lies at 302–304 (SRL).

This sequence belongs to the uricase family.

The protein localises to the peroxisome. The catalysed reaction is urate + O2 + H2O = 5-hydroxyisourate + H2O2. It functions in the pathway purine metabolism; urate degradation; (S)-allantoin from urate: step 1/3. Its function is as follows. Catalyzes the oxidation of uric acid to 5-hydroxyisourate, which is further processed to form (S)-allantoin. This chain is Uricase (UOX), found in Macaca mulatta (Rhesus macaque).